Reading from the N-terminus, the 629-residue chain is tRNA uridine 5-carboxymethylaminomethyl modification enzyme MnmG (629 aa).

Residue 13–18 (GGGHAG) participates in FAD binding. 273-287 (GPRYCPSIEDKIHRF) is an NAD(+) binding site.

Belongs to the MnmG family. Homodimer. Heterotetramer of two MnmE and two MnmG subunits. FAD serves as cofactor.

The protein localises to the cytoplasm. Its function is as follows. NAD-binding protein involved in the addition of a carboxymethylaminomethyl (cmnm) group at the wobble position (U34) of certain tRNAs, forming tRNA-cmnm(5)s(2)U34. In Shewanella baltica (strain OS223), this protein is tRNA uridine 5-carboxymethylaminomethyl modification enzyme MnmG.